The chain runs to 347 residues: Holliday junction branch migration complex subunit RuvB (347 aa).

The tract at residues 13-195 (NEDAVTSGEV…FGIVEHMQYY (183 aa)) is large ATPase domain (RuvB-L). Residues Leu34, Arg35, Gly76, Lys79, Thr80, Thr81, 142–144 (EDY), Arg185, Tyr195, and Arg232 contribute to the ATP site. Position 80 (Thr80) interacts with Mg(2+). A small ATPAse domain (RuvB-S) region spans residues 196 to 266 (TIDELEKIVQ…TTEGALKQLQ (71 aa)). Residues 269–347 (DEGLDQTDRR…QLGLPVPGDK (79 aa)) are head domain (RuvB-H). DNA is bound at residue Arg329.

Belongs to the RuvB family. As to quaternary structure, homohexamer. Forms an RuvA(8)-RuvB(12)-Holliday junction (HJ) complex. HJ DNA is sandwiched between 2 RuvA tetramers; dsDNA enters through RuvA and exits via RuvB. An RuvB hexamer assembles on each DNA strand where it exits the tetramer. Each RuvB hexamer is contacted by two RuvA subunits (via domain III) on 2 adjacent RuvB subunits; this complex drives branch migration. In the full resolvosome a probable DNA-RuvA(4)-RuvB(12)-RuvC(2) complex forms which resolves the HJ.

It localises to the cytoplasm. The catalysed reaction is ATP + H2O = ADP + phosphate + H(+). Functionally, the RuvA-RuvB-RuvC complex processes Holliday junction (HJ) DNA during genetic recombination and DNA repair, while the RuvA-RuvB complex plays an important role in the rescue of blocked DNA replication forks via replication fork reversal (RFR). RuvA specifically binds to HJ cruciform DNA, conferring on it an open structure. The RuvB hexamer acts as an ATP-dependent pump, pulling dsDNA into and through the RuvAB complex. RuvB forms 2 homohexamers on either side of HJ DNA bound by 1 or 2 RuvA tetramers; 4 subunits per hexamer contact DNA at a time. Coordinated motions by a converter formed by DNA-disengaged RuvB subunits stimulates ATP hydrolysis and nucleotide exchange. Immobilization of the converter enables RuvB to convert the ATP-contained energy into a lever motion, pulling 2 nucleotides of DNA out of the RuvA tetramer per ATP hydrolyzed, thus driving DNA branch migration. The RuvB motors rotate together with the DNA substrate, which together with the progressing nucleotide cycle form the mechanistic basis for DNA recombination by continuous HJ branch migration. Branch migration allows RuvC to scan DNA until it finds its consensus sequence, where it cleaves and resolves cruciform DNA. The protein is Holliday junction branch migration complex subunit RuvB of Lactobacillus helveticus (strain DPC 4571).